The following is a 201-amino-acid chain: Recombination protein RecR (201 aa).

The C4-type zinc-finger motif lies at Cys-56 to Cys-71. The Toprim domain occupies Ser-79–Pro-174.

Belongs to the RecR family.

May play a role in DNA repair. It seems to be involved in an RecBC-independent recombinational process of DNA repair. It may act with RecF and RecO. The sequence is that of Recombination protein RecR from Cutibacterium acnes (strain DSM 16379 / KPA171202) (Propionibacterium acnes).